The primary structure comprises 591 residues: MEQSNDGQTAHTLLHLASAEVESLKEGITFLRNKESGKNFIIYKNGEELRACKNLCKHQGGTFIKDIEDLGNRTVRCTKHNWKLDVSSMKYVNPPDSFCQDELVIENDDENGVSLVELSPPNPWDSDPRMAVCLEGGEVQVTYLTHACMDLKLGNKHMVFDPWLIGPAFARGWWLLHEPPCDWLERLCRADLIYISHMHSDHLSYPTLKKLSEKRPDIPIYVGKTERPVFWYLDKSGVKLTNINVVPFGIWQEVDENLRFMILMDGVHPEMDTCIIVEYKGNKILNTVDCTRPNGGKLPTNVALMMSDFAGGASGFPMTFSGGKFTEEWKSQFIKTERKKLLNYKAQLVKDLNPRIYCPFAGYFVEEHPSDKYIKETNLKNDAAELNMLIRNTSDVVTWTPKPGAILDLGRLLIDPTDKNGIIDPPPGTKIFKDSWDYDTYLSIHSFSFDDEIFHYPSWIKEYFTWAGFKGYNLVLRMIETDEHFVPLPKGYNYLVDFLDLSFPTERPERDHPYEEISSRATVIRHVVKHGLLWDDLYIGFQTRIQRNPDIYHHQFWNHFQIKLPLTPPDWKVFLDREKENNATLQNCSIM.

Positions 16 to 114 (LASAEVESLK…IENDDENGVS (99 aa)) constitute a Rieske domain. 4 residues coordinate [2Fe-2S] cluster: C56, H58, C77, and H80.

This sequence belongs to the CMP-Neu5Ac hydroxylase family. Requires [2Fe-2S] cluster as cofactor.

The protein resides in the cytoplasm. It catalyses the reaction CMP-N-acetyl-beta-neuraminate + 2 Fe(II)-[cytochrome b5] + O2 + 2 H(+) = CMP-N-glycoloyl-beta-neuraminate + 2 Fe(III)-[cytochrome b5] + H2O. Its pathway is amino-sugar metabolism; N-acetylneuraminate metabolism. Sialic acids are components of carbohydrate chains of glycoconjugates and are involved in cell-cell recognition and cell-pathogen interactions. Catalyzes the conversion of CMP-N-acetylneuraminic acid (CMP-Neu5Ac) into its hydroxylated derivative CMP-N-glycolylneuraminic acid (CMP-Neu5Gc), a sialic acid abundantly expressed at the surface of many cells. The polypeptide is Cytidine monophosphate-N-acetylneuraminic acid hydroxylase (cmah) (Xenopus laevis (African clawed frog)).